The primary structure comprises 444 residues: Glutamyl-tRNA reductase (444 aa).

Substrate is bound by residues 49 to 52 (TCNR), Ser-109, 114 to 116 (ETQ), and Gln-120. The active-site Nucleophile is the Cys-50. 189–194 (GAGKMG) is a binding site for NADP(+).

This sequence belongs to the glutamyl-tRNA reductase family. Homodimer.

The enzyme catalyses (S)-4-amino-5-oxopentanoate + tRNA(Glu) + NADP(+) = L-glutamyl-tRNA(Glu) + NADPH + H(+). Its pathway is porphyrin-containing compound metabolism; protoporphyrin-IX biosynthesis; 5-aminolevulinate from L-glutamyl-tRNA(Glu): step 1/2. Catalyzes the NADPH-dependent reduction of glutamyl-tRNA(Glu) to glutamate 1-semialdehyde (GSA). This chain is Glutamyl-tRNA reductase, found in Bacillus cereus (strain ATCC 14579 / DSM 31 / CCUG 7414 / JCM 2152 / NBRC 15305 / NCIMB 9373 / NCTC 2599 / NRRL B-3711).